The chain runs to 210 residues: Cytidylate kinase (210 aa).

7–15 (GPAASGKGT) provides a ligand contact to ATP.

This sequence belongs to the cytidylate kinase family. Type 1 subfamily.

The protein resides in the cytoplasm. It carries out the reaction CMP + ATP = CDP + ADP. The catalysed reaction is dCMP + ATP = dCDP + ADP. The chain is Cytidylate kinase from Methylobacterium sp. (strain 4-46).